Here is a 190-residue protein sequence, read N- to C-terminus: Small ribosomal subunit protein eS7x (190 aa).

Met-1 bears the N-acetylmethionine mark. The stretch at 17–50 (TECEEQVAQALFDLENTNQELKSELKDLYINQAV) forms a coiled coil.

Belongs to the eukaryotic ribosomal protein eS7 family.

This chain is Small ribosomal subunit protein eS7x (RPS7C), found in Arabidopsis thaliana (Mouse-ear cress).